The primary structure comprises 69 residues: Toxin Lc b (69 aa).

Cystine bridges form between C3/C20, C13/C41, C45/C56, and C57/C62.

Belongs to the three-finger toxin family. Long-chain subfamily. Type II alpha-neurotoxin sub-subfamily. As to expression, expressed by the venom gland.

It localises to the secreted. In terms of biological role, binds with high affinity to muscular nicotinic acetylcholine receptors (nAChRs), whereas it binds with a low affinity to neuronal alpha-7/CHRNA7 nAChRs. In Laticauda colubrina (Yellow-lipped sea krait), this protein is Toxin Lc b.